The following is a 68-amino-acid chain: ATP synthase F(0) complex subunit 8 (68 aa).

Residues 8–24 form a helical membrane-spanning segment; sequence VWPTIITSMLLTLFLLM. Position 54 is an N6-acetyllysine; alternate (lysine 54). Lysine 54 is subject to N6-succinyllysine; alternate. The residue at position 57 (lysine 57) is an N6-acetyllysine.

This sequence belongs to the ATPase protein 8 family. As to quaternary structure, component of the ATP synthase complex composed at least of ATP5F1A/subunit alpha, ATP5F1B/subunit beta, ATP5MC1/subunit c (homooctomer), MT-ATP6/subunit a, MT-ATP8/subunit 8, ATP5ME/subunit e, ATP5MF/subunit f, ATP5MG/subunit g, ATP5MK/subunit k, ATP5MJ/subunit j, ATP5F1C/subunit gamma, ATP5F1D/subunit delta, ATP5F1E/subunit epsilon, ATP5PF/subunit F6, ATP5PB/subunit b, ATP5PD/subunit d, ATP5PO/subunit OSCP. ATP synthase complex consists of a soluble F(1) head domain (subunits alpha(3) and beta(3)) - the catalytic core - and a membrane F(0) domain - the membrane proton channel (subunits c, a, 8, e, f, g, k and j). These two domains are linked by a central stalk (subunits gamma, delta, and epsilon) rotating inside the F1 region and a stationary peripheral stalk (subunits F6, b, d, and OSCP). Interacts with PRICKLE3.

It localises to the mitochondrion membrane. Its function is as follows. Subunit 8, of the mitochondrial membrane ATP synthase complex (F(1)F(0) ATP synthase or Complex V) that produces ATP from ADP in the presence of a proton gradient across the membrane which is generated by electron transport complexes of the respiratory chain. ATP synthase complex consist of a soluble F(1) head domain - the catalytic core - and a membrane F(1) domain - the membrane proton channel. These two domains are linked by a central stalk rotating inside the F(1) region and a stationary peripheral stalk. During catalysis, ATP synthesis in the catalytic domain of F(1) is coupled via a rotary mechanism of the central stalk subunits to proton translocation. In vivo, can only synthesize ATP although its ATP hydrolase activity can be activated artificially in vitro. Part of the complex F(0) domain. This chain is ATP synthase F(0) complex subunit 8, found in Symphalangus syndactylus (Siamang).